A 464-amino-acid chain; its full sequence is MVFFRSVSAISRLRSRAVQQSSLSNSVRWLHSSELDLKSQMQEIIPEQQDRLKKLKSEQGKVPVGNITVDMVLGGMRGMTGLLWETSLLDADEGIRFRGMSIPECQKILPSAESGEEPLPESLLWLLLTGKVPTKEQANALSTELAHRAAVPAIDALPSTAHPMTQFASGVMALQVQSEFQKAYEQGDISKSKYWEPTFEDALNLIARVPVVASYVYRRMYKDGSIIPLDDSLDYGANFSHMLGFDSPQMKELMRLYVTIHSDHEGGNVSAHAGHLVGSALSDPYLSFAAALNGLAGPLHGLANQEVLLWIKLVVEECGESISKEQLKDYVWKTLNSGKVVPGYGHGVLRKTDPRYICQREFALKHLPDDPLFQLVSKLYEVVPPILTELGKVKNPWPNVDAHSGVLLNYYGLTEARYYTVLFGVSRSLGICSQLIWDRALGLPLERPKSVNMDWLDNFTRLNR.

The transit peptide at 1 to 25 (MVFFRSVSAISRLRSRAVQQSSLSN) directs the protein to the mitochondrion. Residues histidine 300, histidine 346, and aspartate 401 contribute to the active site.

The protein belongs to the citrate synthase family.

It localises to the mitochondrion matrix. It carries out the reaction oxaloacetate + acetyl-CoA + H2O = citrate + CoA + H(+). It participates in carbohydrate metabolism; tricarboxylic acid cycle; isocitrate from oxaloacetate: step 1/2. In Arabidopsis thaliana (Mouse-ear cress), this protein is Citrate synthase 5, mitochondrial (CSY5).